We begin with the raw amino-acid sequence, 488 residues long: Neisserial heparin binding antigen (488 aa).

The signal sequence occupies residues 1 to 17 (MFKRSVIAMACIFALSA). A lipid anchor (N-palmitoyl cysteine) is attached at C18. The S-diacylglycerol cysteine moiety is linked to residue C18. Residues 21–201 (GGGGSPDVKS…NPAPANGGSN (181 aa)) are disordered. Residues 43–53 (SEKETEAKEDA) show a composition bias toward basic and acidic residues. The segment covering 54–70 (PQAGSQGQGAPSAQGSQ) has biased composition (low complexity). Polar residues-rich tracts occupy residues 101–118 (DMPQ…NHTP) and 127–142 (MENQ…QPAN). The segment covering 160–183 (AGGQNAGNTAAQGANQAGNNQAAG) has biased composition (low complexity). Residues 296–306 (RFRRSARSRRS) carry the Arg-rich motif motif. A C1 fragment region spans residues 306-488 (SLPAEMPLIP…GVFAGKKEQD (183 aa)).

This sequence belongs to the NHBA family. The C-terminal beta-barrel forms a monomer. Cleaved in vivo by the Neisserial phase-variable autotransporter/serine protease NalP to give 2 fragments. The N-terminus remains in the cell outer membrane while the 22 kDa C-terminus (beginning on Ser-293) is soluble; this soluble fragment is called C2. Cleaved in vitro by human lactoferrin (LTF, between Arg-305 and Ser-306), this fragment is called C1. Cleavage by NalP or lactoferrin does not alter killing of Neisseria by bactericidal antibodies in vitro. Recombinant and cell surface protein is cleaved by human saliva kallikrein (KLK1) between Ser-303 and Arg-304; in saliva kallikrein is more active on NHBA than lactoferrin. Human plasma kallikrein (KLKB1) cleaves in a similar manner to KLK1.

The protein resides in the cell outer membrane. It localises to the cell surface. Its subcellular location is the host mitochondrion. Its function is as follows. A major human immunogenic protein detected in patients recovering from meningitidis, where it induces bactericidal antibodies. Binds heparin and heparan sulfate proteoglycan in vitro via the Arg-rich motif. Heparin-binding to this protein protects bacteria against killing by bactericidal antibodies (serum killing). Binds to human cells via the Arg-rich region; binding may require the intact protein as protein fragments do not bind to human cells. Protein binding to human cells is abolished by treatment with heparinase III but not chondroitinase ABC. The bacteria binds a number of human extracellular sialyated and/or sulfated glycans via this protein, including chondroitin sulfate (KD=5.2 nM), heparin (KD=52 nM) and ganglioside GT3 (KD=210 nM). The recombinant protein binds DNA non-specifically. Plays a role in extracellular-DNA (eDNA) mediated biofilm formation. In strain MC58 eDNA stimulates biofilm formation. When NHBA is not processed by NalP there is an increase in positively charged, NHBA- and IgA-derived DNA-binding peptides on the cell surface, resulting in increased DNA-binding peptides and increased biofilm formation. Functionally, [C2 fragment] Localizes to host mitochondria when applied to the apical side of human endothelial cell layers, where it induces production of reactive oxygen species which lead to increased permeability of host endothelial cells. The C1 fragment (which lacks the first 14 residues of C2) does not have this effect. It is not known if this occurs during Neisseria infections. This is Neisserial heparin binding antigen from Neisseria meningitidis serogroup B (strain ATCC BAA-335 / MC58).